A 196-amino-acid chain; its full sequence is Putative NADH dehydrogenase/NAD(P)H nitroreductase Smlt0482 (196 aa).

This sequence belongs to the nitroreductase family. HadB/RutE subfamily. FMN is required as a cofactor.

In Stenotrophomonas maltophilia (strain K279a), this protein is Putative NADH dehydrogenase/NAD(P)H nitroreductase Smlt0482.